A 256-amino-acid polypeptide reads, in one-letter code: Ethylene-responsive transcription factor ERF084 (256 aa).

The AP2/ERF DNA-binding region spans 115 to 172 (GFMGVRKRPWGRWSAEIRDRIGRCRHWLGTFDTAEEAARAYDAAARRLRGTKAKTNFV).

The protein belongs to the AP2/ERF transcription factor family. ERF subfamily.

Its subcellular location is the nucleus. Probably acts as a transcriptional activator. Binds to the GCC-box pathogenesis-related promoter element. May be involved in the regulation of gene expression by stress factors and by components of stress signal transduction pathways. This Arabidopsis thaliana (Mouse-ear cress) protein is Ethylene-responsive transcription factor ERF084 (ERF084).